The chain runs to 1043 residues: V(D)J recombination-activating protein 1 (1043 aa).

Residues 1–288 form an interaction with importin alpha-1 region; sequence MAASFPPTLG…LAVDFPEHFV (288 aa). A compositionally biased stretch (basic and acidic residues) spans 40 to 54; it reads KTPEEAQKEKKDSFE. The interval 40–80 is disordered; it reads KTPEEAQKEKKDSFEGKPSLEQSPAVLDKADGQKPVPTQPL. Lys-234 is covalently cross-linked (Glycyl lysine isopeptide (Lys-Gly) (interchain with G-Cter in ubiquitin)). Residues Cys-269, His-273, Cys-293, Cys-296, His-298, Cys-308, His-310, Cys-313, Cys-316, Cys-328, Cys-331, Cys-358, Cys-363, His-375, and His-379 each contribute to the Zn(2+) site. The segment at 293–332 adopts an RING-type zinc-finger fold; the sequence is CQICEHILADPVETNCKHVFCRVCILRCLKVMGSYCPSCR. The RAG1-type zinc finger occupies 354–383; the sequence is LMVKCPAKECNEEVSLEKYNHHISSHKESK. Residues 392–459 constitute a DNA-binding region (NBD); it reads GGRPRQHLLS…QADELEAIMQ (68 aa). Positions 603, 711, and 965 each coordinate a divalent metal cation.

It belongs to the RAG1 family. In terms of assembly, homodimer. Component of the RAG complex composed of core components RAG1 and RAG2, and associated component HMGB1 or HMGB2. Interacts with DCAF1, leading to recruitment of the CUL4A-RBX1-DDB1-DCAF1/VPRBP complex to ubiquitinate proteins and limit error-prone repair during V(D)J recombination. The cofactor is Mg(2+). It depends on Mn(2+) as a cofactor. In terms of processing, autoubiquitinated in the presence of CDC34/UBCH3. Maturing lymphoid cells.

The protein localises to the nucleus. It carries out the reaction S-ubiquitinyl-[E2 ubiquitin-conjugating enzyme]-L-cysteine + [acceptor protein]-L-lysine = [E2 ubiquitin-conjugating enzyme]-L-cysteine + N(6)-ubiquitinyl-[acceptor protein]-L-lysine.. Catalytic component of the RAG complex, a multiprotein complex that mediates the DNA cleavage phase during V(D)J recombination. V(D)J recombination assembles a diverse repertoire of immunoglobulin and T-cell receptor genes in developing B and T-lymphocytes through rearrangement of different V (variable), in some cases D (diversity), and J (joining) gene segments. In the RAG complex, RAG1 mediates the DNA-binding to the conserved recombination signal sequences (RSS) and catalyzes the DNA cleavage activities by introducing a double-strand break between the RSS and the adjacent coding segment. RAG2 is not a catalytic component but is required for all known catalytic activities. DNA cleavage occurs in 2 steps: a first nick is introduced in the top strand immediately upstream of the heptamer, generating a 3'-hydroxyl group that can attack the phosphodiester bond on the opposite strand in a direct transesterification reaction, thereby creating 4 DNA ends: 2 hairpin coding ends and 2 blunt, 5'-phosphorylated ends. The chromatin structure plays an essential role in the V(D)J recombination reactions and the presence of histone H3 trimethylated at 'Lys-4' (H3K4me3) stimulates both the nicking and haipinning steps. The RAG complex also plays a role in pre-B cell allelic exclusion, a process leading to expression of a single immunoglobulin heavy chain allele to enforce clonality and monospecific recognition by the B-cell antigen receptor (BCR) expressed on individual B-lymphocytes. The introduction of DNA breaks by the RAG complex on one immunoglobulin allele induces ATM-dependent repositioning of the other allele to pericentromeric heterochromatin, preventing accessibility to the RAG complex and recombination of the second allele. In addition to its endonuclease activity, RAG1 also acts as an E3 ubiquitin-protein ligase that mediates monoubiquitination of histone H3. Histone H3 monoubiquitination is required for the joining step of V(D)J recombination. Mediates polyubiquitination of KPNA1. In Homo sapiens (Human), this protein is V(D)J recombination-activating protein 1 (RAG1).